We begin with the raw amino-acid sequence, 181 residues long: Inner membrane-spanning protein YciB (181 aa).

A run of 5 helical transmembrane segments spans residues 22-42 (IYTA…VTYA), 50-70 (MQLI…FLHD), 80-100 (IVYC…KPVI), 122-142 (WVLF…EMPL), and 148-168 (FKVF…GMYV).

It belongs to the YciB family.

The protein resides in the cell inner membrane. Its function is as follows. Plays a role in cell envelope biogenesis, maintenance of cell envelope integrity and membrane homeostasis. This is Inner membrane-spanning protein YciB from Aliivibrio fischeri (strain MJ11) (Vibrio fischeri).